Consider the following 564-residue polypeptide: NAD-dependent malic enzyme (564 aa).

The active-site Proton donor is the Tyr104. Arg157 is an NAD(+) binding site. The active-site Proton acceptor is the Lys175. Residues Glu246, Asp247, and Asp270 each coordinate a divalent metal cation. The NAD(+) site is built by Asp270 and Asn417.

This sequence belongs to the malic enzymes family. As to quaternary structure, homotetramer. Mg(2+) is required as a cofactor. Mn(2+) serves as cofactor.

It catalyses the reaction (S)-malate + NAD(+) = pyruvate + CO2 + NADH. It carries out the reaction oxaloacetate + H(+) = pyruvate + CO2. The protein is NAD-dependent malic enzyme of Aeromonas salmonicida (strain A449).